A 441-amino-acid polypeptide reads, in one-letter code: Inner kinetochore subunit mis17 (441 aa).

Residues 160–173 are compositionally biased toward polar residues; the sequence is SSILENSPPNKVQR. Residues 160–240 are disordered; it reads SSILENSPPN…TSSMAPRNLL (81 aa). Over residues 174 to 183 the composition is skewed to low complexity; that stretch reads LSSLDSSQDS. Residues 192–201 show a composition bias toward polar residues; it reads VTGTTFSSQA. Over residues 217–233 the composition is skewed to low complexity; it reads SLTNQSSSLQSSLQTSS.

The protein belongs to the CENP-U/AME1 family. Component of the heterotetrameric kinetochore subcomplex COMA, which consists of fta2, fta7, mal2 and mis17. The COMA subcomplex is part of a larger constitutive centromere-associated network (CCAN) (also known as central kinetochore Sim4 complex in fission yeast), which is composed of at least cnl2, cnp3, cnp20, fta1, fta2, fta3, fta4, fta6, fta7, mal2, mhf1, mhf2, mis6, mis15, mis17, sim4 and wip1. Interacts with mis6 and mis15.

The protein localises to the nucleus. It localises to the chromosome. Its subcellular location is the centromere. It is found in the kinetochore. Its function is as follows. Component of the kinetochore, a multiprotein complex that assembles on centromeric DNA and attaches chromosomes to spindle microtubules, mediating chromosome segregation and sister chromatid segregation during meiosis and mitosis. Component of the inner kinetochore COMA complex, which connects centromere-associated proteins and the outer kinetochore. COMA interacts with other inner kinetochore proteins to form the inner kinetochore constitutive centromere-associated network (CCAN), which serves as a structural platform for outer kinetochore assembly. This Schizosaccharomyces pombe (strain 972 / ATCC 24843) (Fission yeast) protein is Inner kinetochore subunit mis17 (mis17).